The following is a 266-amino-acid chain: Norfluorocurarine synthase 1 (266 aa).

Residues 11 to 121 (HFVLVHGAGH…VMPDAVHPPS (111 aa)) form the AB hydrolase-1 domain. Active-site residues include serine 86, aspartate 216, and histidine 244.

Belongs to the AB hydrolase superfamily. In terms of assembly, homodimer. As to expression, mainly expressed in roots.

It carries out the reaction 17-dehydropreakuammicine + H2O = norfluorocurarine + methanol + CO2. The protein operates within alkaloid biosynthesis. Its function is as follows. Hydrolase involved in the biosynthesis of curare monoterpene indole alkaloids (MIAs), natural products such as strychnine, a neurotoxic compound used as a pesticide to control rodents, and its pharmacologically active derivatives, including brucine, used to regulate blood pressure. Curare alkaloids act as animal glycine receptor antagonists. Catalyzes the conversion of dehydropreakuammicine to norfluorocurarine. This Strychnos nux-vomica (Poison nut) protein is Norfluorocurarine synthase 1.